A 254-amino-acid chain; its full sequence is (2Z,6E)-farnesyl diphosphate synthase (254 aa).

Asp34 is a catalytic residue. Asp34 is a binding site for Mg(2+). Substrate-binding positions include 35–38, Trp39, His52, and 80–82; these read GNRR and STD. Asn83 (proton acceptor) is an active-site residue. Residues Arg86, Arg203, and 209-211 contribute to the substrate site; that span reads RLS. Glu222 contributes to the Mg(2+) binding site.

This sequence belongs to the UPP synthase family. Z-FPP synthase subfamily. Homodimer. It depends on Mg(2+) as a cofactor.

The enzyme catalyses isopentenyl diphosphate + (2E)-geranyl diphosphate = (2Z,6E)-farnesyl diphosphate + diphosphate. In terms of biological role, catalyzes the condensation of only one isopentenyl pyrophosphate (IPP) unit in the cis configuration to E-geranyl diphosphate (E-GPP) generating the 15 carbon product (2Z,6E)-farnesyl diphosphate (Z-FPP or EZ-FPP). Only geranyl diphosphate (GPP) can be used as isoprenyl acceptor. The sequence is that of (2Z,6E)-farnesyl diphosphate synthase from Thermobifida fusca (strain YX).